The sequence spans 658 residues: MLARSRVCLQTITRRLADFPEANAIKKKFLFRKDTSTIKQLKGLSSGQKIVLNGWIEQKPKRVGKNLIFGLLRDSNGDIIQLVDNKSLLKGFTLEDVVQAVGILSLKRKLSNEDADEYEVQLEDITVLNASNKKPAQMQDFKLSAIYPPEFRYLQLRNPKYQDFLKKRSSISKEIRNSFNNFDFTEVETPMLFKATPEGAREFLVPTRTKRSDGKPSFYALDQSPQQYKQLLMASGVNKYYQMARCFRDEDLRADRQPEFTQVDMEMAFANSEDVMKIIEKTVSGVWSKFSKKRGLLTLDSKGTLVPAKKENGTVSIFRMTYEQAMTSYGIDKPDLRAPDLKIINLGEFNAFSHLNKKFPVFEVIILRSAFSNMEEYKERWSFLTNNSNYNYRVPIVLPIENDEQANSNWFENFHAIATFENPHLITKFLKLKKGDIVCGCTREPNHSIFENPTPLGRLRQLVLQSEHGKNIYHAVNKDVASWIVDFPLFSPVIIEDKSGKKEKLAYPEYEKDRLCSTHHPFTMVKLKDYEKLEKTPEKCLGRHYDLVVNGVELGGGSTRIHDPRLQDYIFEDILKIDNAYELFGHLLNAFDMGTPPHAGFAIGFDRMCAMICETESIRDVIAFPKSITGADLVVKSPSVIPESILEPYNIKYSNSKK.

Glu-198 provides a ligand contact to L-aspartate. The aspartate stretch occupies residues 226 to 229 (QQYK). Residue Arg-248 participates in L-aspartate binding. ATP is bound by residues 248-250 (RDE) and Glu-553. Arg-560 is a binding site for L-aspartate. 604–607 (GFDR) provides a ligand contact to ATP.

The protein belongs to the class-II aminoacyl-tRNA synthetase family. Type 1 subfamily.

It is found in the mitochondrion matrix. The catalysed reaction is tRNA(Asp) + L-aspartate + ATP = L-aspartyl-tRNA(Asp) + AMP + diphosphate. Functionally, catalyzes the attachment of aspartate to tRNA(Asp) in the mitochondrion. In Saccharomyces cerevisiae (strain ATCC 204508 / S288c) (Baker's yeast), this protein is Aspartate--tRNA ligase, mitochondrial (MSD1).